The sequence spans 506 residues: Tabersonine 6,7-epoxidase isoform 1 (506 aa).

Residues 1–21 form a helical membrane-spanning segment; sequence MEFVVSLFAFVVSCFILLKVA. 2 N-linked (GlcNAc...) asparagine glycosylation sites follow: Asn-173 and Asn-261. Cys-441 serves as a coordination point for heme.

The protein belongs to the cytochrome P450 family. It depends on heme as a cofactor. As to expression, mainly expressed in roots.

It localises to the endoplasmic reticulum membrane. The enzyme catalyses (-)-tabersonine + reduced [NADPH--hemoprotein reductase] + O2 = lochnericine + oxidized [NADPH--hemoprotein reductase] + H2O + H(+). It participates in alkaloid biosynthesis. Its function is as follows. Component of the monoterpenoid indole alkaloids (MIAs, e.g. echitovenine, tabersonine, lochnericine, 19-hydroxytabersonine and horhammericine) biosynthetic pathway; MIAs are used in cancer treatment and other medical applications. Cytochrome P450 catalyzing the conversion of tabersonine to lochnericine. The protein is Tabersonine 6,7-epoxidase isoform 1 of Catharanthus roseus (Madagascar periwinkle).